The sequence spans 776 residues: Glutathione biosynthesis bifunctional protein GshAB (776 aa).

Residues 1-354 (MIKLDMTILD…QLADENENNI (354 aa)) are glutamate--cysteine ligase. The region spanning 521-775 (KLVLAENNIR…IGDKILDFLF (255 aa)) is the ATP-grasp domain. ATP is bound at residue 548–606 (SLFKDKQIVVKPKSTNYGWGISIFKNKFTTEDYQEALNIAFSYDSSVIIEEFIPGDEFR). Residues aspartate 728, glutamate 745, and asparagine 747 each coordinate Mg(2+). Residues aspartate 728, glutamate 745, and asparagine 747 each coordinate Mn(2+).

In the N-terminal section; belongs to the glutamate--cysteine ligase type 1 family. Type 2 subfamily. As to quaternary structure, monomer. Mg(2+) is required as a cofactor. Mn(2+) serves as cofactor.

It catalyses the reaction L-cysteine + L-glutamate + ATP = gamma-L-glutamyl-L-cysteine + ADP + phosphate + H(+). The enzyme catalyses gamma-L-glutamyl-L-cysteine + glycine + ATP = glutathione + ADP + phosphate + H(+). The protein operates within sulfur metabolism; glutathione biosynthesis; glutathione from L-cysteine and L-glutamate: step 1/2. It functions in the pathway sulfur metabolism; glutathione biosynthesis; glutathione from L-cysteine and L-glutamate: step 2/2. In terms of biological role, synthesizes glutathione from L-glutamate and L-cysteine via gamma-L-glutamyl-L-cysteine. The sequence is that of Glutathione biosynthesis bifunctional protein GshAB from Listeria welshimeri serovar 6b (strain ATCC 35897 / DSM 20650 / CCUG 15529 / CIP 8149 / NCTC 11857 / SLCC 5334 / V8).